Reading from the N-terminus, the 212-residue chain is Transcription antitermination protein NusB (212 aa).

Belongs to the NusB family.

Its function is as follows. Involved in transcription antitermination. Required for transcription of ribosomal RNA (rRNA) genes. Binds specifically to the boxA antiterminator sequence of the ribosomal RNA (rrn) operons. The chain is Transcription antitermination protein NusB from Gloeothece citriformis (strain PCC 7424) (Cyanothece sp. (strain PCC 7424)).